Here is a 90-residue protein sequence, read N- to C-terminus: PIK3R3 upstream open reading frame protein (90 aa).

The tract at residues 1–63 (MGPSQLVRAP…PASEATNISD (63 aa)) is disordered. A compositionally biased stretch (basic residues) spans 27-46 (PRRRCPSMFKCSRRTYRQKP). Over residues 50 to 63 (TATNPASEATNISD) the composition is skewed to polar residues.

The chain is PIK3R3 upstream open reading frame protein from Mus musculus (Mouse).